A 264-amino-acid chain; its full sequence is Major prion protein (264 aa).

Residues 1-24 (MVKSHIGSWILVLFVAMWSDVGLC) form the signal peptide. An interaction with GRB2, ERI3 and SYN1 region spans residues 25–241 (KKRPKPGGGW…ESQAYYQRGA (217 aa)). Positions 28-119 (PKPGGGWNTG…WNKPSKPKTN (92 aa)) are disordered. 6 repeat units span residues 54–62 (PQGGGGWGQ), 63–70 (PHGGGWGQ), 71–78 (PHGGGWGQ), 79–86 (PHGGGWGQ), 87–94 (PHGGGWGQ), and 95–103 (PHGGGGWGQ). Residues 54-103 (PQGGGGWGQPHGGGWGQPHGGGWGQPHGGGWGQPHGGGWGQPHGGGGWGQ) form a 6 X 8 AA tandem repeats of P-H-G-G-G-W-G-Q region. Positions 55–105 (QGGGGWGQPHGGGWGQPHGGGWGQPHGGGWGQPHGGGWGQPHGGGGWGQGG) are enriched in gly residues. Positions 72, 73, 74, 80, 81, 82, 88, 89, 90, 96, 98, and 99 each coordinate Cu(2+). Residues Cys-190 and Cys-225 are joined by a disulfide bond. Residues Asn-192 and Asn-208 are each glycosylated (N-linked (GlcNAc...) asparagine). Residue Ala-241 is the site of GPI-anchor amidated alanine attachment. A propeptide spans 242–264 (SVILFSSPPVILLISFLIFLIVG) (removed in mature form).

It belongs to the prion family. In terms of assembly, monomer and homodimer. Has a tendency to aggregate into amyloid fibrils containing a cross-beta spine, formed by a steric zipper of superposed beta-strands. Soluble oligomers may represent an intermediate stage on the path to fibril formation. Copper binding may promote oligomerization. Interacts with GRB2, APP, ERI3/PRNPIP and SYN1. Mislocalized cytosolically exposed PrP interacts with MGRN1; this interaction alters MGRN1 subcellular location and causes lysosomal enlargement. Interacts with KIAA1191.

Its subcellular location is the cell membrane. It localises to the golgi apparatus. Its primary physiological function is unclear. Has cytoprotective activity against internal or environmental stresses. May play a role in neuronal development and synaptic plasticity. May be required for neuronal myelin sheath maintenance. May play a role in iron uptake and iron homeostasis. Soluble oligomers are toxic to cultured neuroblastoma cells and induce apoptosis (in vitro). Association with GPC1 (via its heparan sulfate chains) targets PRNP to lipid rafts. Also provides Cu(2+) or Zn(2+) for the ascorbate-mediated GPC1 deaminase degradation of its heparan sulfate side chains. The protein is Major prion protein (PRNP) of Antilope cervicapra (Blackbuck).